The chain runs to 167 residues: Anaerobic nitrite reductase NSHB4 (167 aa).

A Globin domain is found at 12–162 (RFTEEQEALV…LVAAIKEGMK (151 aa)). Positions 45-49 (EVAPS) match the Homodimerization motif. 5 residues coordinate heme b: Ser55, His73, Arg103, Thr107, and His108. The short motif at 115–127 (DTHFEVARFALLE) is the Homodimerization element.

It belongs to the plant globin family. Homodimer. It depends on heme b as a cofactor.

The protein resides in the cytoplasm. It is found in the nucleus. It catalyses the reaction Fe(III)-heme b-[protein] + nitric oxide + H2O = Fe(II)-heme b-[protein] + nitrite + 2 H(+). Its function is as follows. Phytoglobin that reduces nitrite to nitric oxide under anoxic conditions (e.g. during flooding or in waterlogged soil). May not function as an oxygen storage or transport protein. Has an unusually high affinity for O(2) through an hexacoordinate heme iron because of a very low dissociation constant. This chain is Anaerobic nitrite reductase NSHB4, found in Oryza sativa subsp. indica (Rice).